Reading from the N-terminus, the 884-residue chain is Alanine--tRNA ligase (884 aa).

Residues H572, H576, C673, and H677 each coordinate Zn(2+).

Belongs to the class-II aminoacyl-tRNA synthetase family. Zn(2+) serves as cofactor.

It localises to the cytoplasm. The enzyme catalyses tRNA(Ala) + L-alanine + ATP = L-alanyl-tRNA(Ala) + AMP + diphosphate. Its function is as follows. Catalyzes the attachment of alanine to tRNA(Ala) in a two-step reaction: alanine is first activated by ATP to form Ala-AMP and then transferred to the acceptor end of tRNA(Ala). Also edits incorrectly charged Ser-tRNA(Ala) and Gly-tRNA(Ala) via its editing domain. In Xylella fastidiosa (strain M12), this protein is Alanine--tRNA ligase.